A 666-amino-acid chain; its full sequence is Fructose-1,6-bisphosphatase class 3 (666 aa).

The protein belongs to the FBPase class 3 family. It depends on Mn(2+) as a cofactor.

It catalyses the reaction beta-D-fructose 1,6-bisphosphate + H2O = beta-D-fructose 6-phosphate + phosphate. It functions in the pathway carbohydrate biosynthesis; gluconeogenesis. This Phocaeicola vulgatus (strain ATCC 8482 / DSM 1447 / JCM 5826 / CCUG 4940 / NBRC 14291 / NCTC 11154) (Bacteroides vulgatus) protein is Fructose-1,6-bisphosphatase class 3.